The chain runs to 271 residues: Phosphate import ATP-binding protein PstB 1 (271 aa).

In terms of domain architecture, ABC transporter spans Leu-25–Ile-266. Residue Gly-57–Ser-64 participates in ATP binding.

It belongs to the ABC transporter superfamily. Phosphate importer (TC 3.A.1.7) family. As to quaternary structure, the complex is composed of two ATP-binding proteins (PstB), two transmembrane proteins (PstC and PstA) and a solute-binding protein (PstS).

It localises to the cell inner membrane. The catalysed reaction is phosphate(out) + ATP + H2O = ADP + 2 phosphate(in) + H(+). Its function is as follows. Part of the ABC transporter complex PstSACB involved in phosphate import. Responsible for energy coupling to the transport system. The sequence is that of Phosphate import ATP-binding protein PstB 1 from Pectobacterium atrosepticum (strain SCRI 1043 / ATCC BAA-672) (Erwinia carotovora subsp. atroseptica).